Reading from the N-terminus, the 627-residue chain is Probable inactive L-type lectin-domain containing receptor kinase III.1 (627 aa).

The signal sequence occupies residues 1–23 (MITFKSIALTIIFLSYFVSCVSS). Residues 24–303 (QRETKFLNHG…STEKKSNNTM (280 aa)) are Extracellular-facing. The legume-lectin like stretch occupies residues 26-262 (ETKFLNHGFL…SHFVLGWSFN (237 aa)). N-linked (GlcNAc...) asparagine glycans are attached at residues Asn-57, Asn-78, Asn-127, Asn-184, Asn-202, Asn-209, and Asn-230. The tract at residues 272 to 297 (ITKLPSLPDPPPTLSPSPSPPVSTEK) is disordered. Over residues 278 to 292 (LPDPPPTLSPSPSPP) the composition is skewed to pro residues. Residue Asn-300 is glycosylated (N-linked (GlcNAc...) asparagine). The chain crosses the membrane as a helical span at residues 304–324 (LIIIVAASATVALMILIFSGF). Residues 325–627 (WFLRRDKIFF…PHDDYLFYGV (303 aa)) are Cytoplasmic-facing. The Protein kinase domain occupies 353 to 623 (FDNSKLLGER…TEALPHDDYL (271 aa)). Residues 359-367 (LGERNSGSF) and Lys-381 each bind ATP.

In the C-terminal section; belongs to the protein kinase superfamily. Ser/Thr protein kinase family. It in the N-terminal section; belongs to the leguminous lectin family.

It localises to the cell membrane. This is Probable inactive L-type lectin-domain containing receptor kinase III.1 (LECRK31) from Arabidopsis thaliana (Mouse-ear cress).